Here is a 504-residue protein sequence, read N- to C-terminus: Maturase K (504 aa).

The protein belongs to the intron maturase 2 family. MatK subfamily.

The protein localises to the plastid. It is found in the chloroplast. Functionally, usually encoded in the trnK tRNA gene intron. Probably assists in splicing its own and other chloroplast group II introns. The sequence is that of Maturase K from Cucumis sativus (Cucumber).